The following is a 393-amino-acid chain: NAD(P)H-quinone oxidoreductase subunit H, chloroplastic (393 aa).

It belongs to the complex I 49 kDa subunit family. NDH is composed of at least 16 different subunits, 5 of which are encoded in the nucleus.

It is found in the plastid. Its subcellular location is the chloroplast thylakoid membrane. The catalysed reaction is a plastoquinone + NADH + (n+1) H(+)(in) = a plastoquinol + NAD(+) + n H(+)(out). It carries out the reaction a plastoquinone + NADPH + (n+1) H(+)(in) = a plastoquinol + NADP(+) + n H(+)(out). In terms of biological role, NDH shuttles electrons from NAD(P)H:plastoquinone, via FMN and iron-sulfur (Fe-S) centers, to quinones in the photosynthetic chain and possibly in a chloroplast respiratory chain. The immediate electron acceptor for the enzyme in this species is believed to be plastoquinone. Couples the redox reaction to proton translocation, and thus conserves the redox energy in a proton gradient. The protein is NAD(P)H-quinone oxidoreductase subunit H, chloroplastic of Draba nemorosa (Woodland whitlowgrass).